The chain runs to 2055 residues: Dedicator of cytokinesis protein 9 (2055 aa).

S178 and S181 each carry phosphoserine. Positions 185-292 (GITKHGWLYK…WVTVLNKILQ (108 aa)) constitute a PH domain. The segment at 301–326 (EKRNGDPHEDDEQSKLEGSGSGLDSY) is disordered. 2 positions are modified to phosphoserine: S444 and S453. The C2 DOCK-type domain maps to 649–827 (SNHLYVYPKY…PLLKISTHLV (179 aa)). Residues S936 and S1244 each carry the phosphoserine modification. T1250 carries the post-translational modification Phosphothreonine. The tract at residues 1253-1291 (INSVRNADSRGSLISTDSGNSLPDRNPEKSNSLDKQQQS) is disordered. S1264, S1270, and S1273 each carry phosphoserine. Over residues 1264-1276 (SLISTDSGNSLPD) the composition is skewed to polar residues. The DOCKER domain maps to 1614–2055 (KSYASTPELR…LSDIMREQMG (442 aa)). Residues 1679–2055 (DEEASMMEDV…LSDIMREQMG (377 aa)) are interaction with CDC42.

Belongs to the DOCK family. Homodimer. Interacts preferentially with nucleotide-depleted CDC42. In terms of tissue distribution, expressed in lung. Also detected in Peyers patches, thymus, brain and lymph nodes. Expressed in Purkinje cells.

Its subcellular location is the endomembrane system. Its function is as follows. Guanine nucleotide-exchange factor (GEF) that activates CDC42 by exchanging bound GDP for free GTP. Overexpression induces filopodia formation. The sequence is that of Dedicator of cytokinesis protein 9 from Mus musculus (Mouse).